The primary structure comprises 2157 residues: MQPHRVFIFGDQTGGFATGLQQLLLDKTNPSLVYFVDHANLALRQELSRLPSTDRETLPLIGSVQDILTLHKKGERNVVIDSILSTVYHLACFIYKYGNAGCAYPNRQDVHVTGMCVGSLAAAAVSCSRSIGDVIVAGIVAIRAALRVGLRAHQAALLISNRAAPHTHWSYAVSTESLRLDLIKDALEKFAQDMDTSPLSHPYISAIGLDSVTVSGPPSHLHQFWRENTTFHKPIPIPIWAPYHGPHIFGDSDVETIIESLHPIPKLSQQAPIISSGSGVMASQTLADLIRAALRDILLHRLDLPALVGHIKDIFRSSPNQDFAMTPIATNAATSLVATTAKAAGNTGSVDNEIMDAAALAGSASRATSAKTHDSKIAIIGMSGRFPEAADLDSFWSLLEQGVDAYRPVPPDRFDAHAHHDETGRRKNTSKVLGGCWINQPGLFDPKFFSISPKEAEQSDPAQRLALQTAYEALEMAGVVPDRTQSTQRDRVGVFYGMVSDDWREINSGQNIDTYFIPGGIRAFTPGRINYHFKFSGPSITVDTACSSSLAAIHVACNSLWRGDCDTAVAGGVNVLTNPDIFAGLDRGHFLSTTGNCKTFDDDADGYCRADGVGTVILKRLEDAVMDKDPILAVLNSAYTNHSAEAVSITRPHAGAQELIFSKLLRETGIHPHDVSYIEMHGTGTQAGDATEMSSVLRTFAPDTGRLSSQTLHLGSAKSNVGHGEAASGVTSLIKVLLMMKHNTIPPHCGIKGRINHRFPTDLRERNVFIASQPVAWNKPHAGSGKRRVFINNFSAAGGNSALLLEDAPTDEHPETKDPRSTHIVAVSAKSSTSLANNLKRLRDFVQDNIHDLDSLSKLSYTTTARRIHYPFRAAMAVSSRDQLLQGIESVLLRDEMPKPGKSQKNIGFVFSGQGAQYAGMGRHLFHNNHTFRTQILACNQICLSHGFPSILEIFKQDVDMNSLEPLLVQLGTTCLQMSLVAFWKSLGVTPDFCIGHSLGEYAALQAAGVLSVSDTIYLTGIRARMLQEKCSAGSHAMLAVRAPLARVNALLDPAIHEVTCLNGPQDVVIGGRVADVEELEKELAKQDIKAVKVSVPFAFHSTQVEPILGEFCDAARGVPFQTQNIPVISTLLGEVVQPEATGVFGPGYLKRHCREPVNFAAAVEAARDANVIHAGTVFVEIGPHPVCLALLKSNMGPDAVTLASLHRKDDGWKVLADTLAALYQAGLKINWDEVHRDFASCQEVLPLPSYSWDNKNYWIQYVHNWTLTKGDEPAATAETTALQALDGLTSSVQKIIRQTDGPGSLVTIVVQSDFGSARLAEVAQGHKVNGEMLCTSSLYAEIGMTLGRQLLEKYRPDLDGYSTEIKDMSVDKPLILKDENKRTLFRAEVVHDKSTHTATMSIYSVDSAGNKTVDHARCLLRFADPTSWLDEWERTHYLIDRSVRWLEERAEQGTDSLLSRGIVYKLFSSLVDYSPSFKGLQEVILNSGDREAAAKVRLQAKKGDFDCNPMWIDSFGQLTGFLMNGHDFTGKDEVFINHGWRSMRCAKPFRKDAVYRTYIRMQHVEKTKYRGDLYIIEDGVIVAVFGGMTFLGMSRSLLNKVLPPRRGTDAINTAHPVAAAQQGMAASAKDTERRPLDIPTRAQRQPSSAQTGTMGRILAILSKEVGLSMETLTDDLVFADYGVDSLLSLTITGRIREELGLDMDSSIFTHYSTLGELKAFLGADQLPDDAVACESSNGQHTPQTSDKGSGTLAVQKTDDDTSPDMTLNRVCAIIAEEVGISVQELSSSQDFQELGIDSLSSLTILSRVREELQLDLESDFFDTHPSFYSLQKALCGSEAASNGAPEANETTPSSHRLESDLRSITWQSGQNIVASPPHATSILVSGSPSTARMILVLFPDGSGSAASYGALAPKIRRDIAVYALNCPWRTNGEEILRLGVTLDQMVAKHLVEVGRILDSHRHGRPGSANASVGLALGGWSAGGILALEAVRQLGEAGVAVQKMVLLDAPNPIGLQNPPPRMFHFLDELGILGAGKGKAPAWVLRHFDAMVNLLKSYRPRRLGAEDAPKCLIVYAKDGICKDPDGPRMDTKPDDAREMLWLLYNRVDFSAEGWKTLVGQQNLAVGVVDDVNHFSMMNPGPKMIEMGNLIGEFLLGPS.

Residues Phe-7 to His-244 form an N-terminal acylcarrier protein transacylase domain (SAT) region. The 434-residue stretch at Asp-374–Asp-807 folds into the Ketosynthase family 3 (KS3) domain. Residues Cys-546, His-681, and His-723 each act as for beta-ketoacyl synthase activity in the active site. The segment at Gly-908–Trp-1213 is malonyl-CoA:ACP transacylase (MAT) domain. Residue Ser-998 is the For acyl/malonyl transferase activity of the active site. The tract at residues Thr-1290–Pro-1605 is product template (PT) domain. The N-terminal hotdog fold stretch occupies residues Gln-1294–Ser-1428. A PKS/mFAS DH domain is found at Gln-1294–Asn-1600. His-1327 functions as the Proton acceptor; for dehydratase activity in the catalytic mechanism. Residues Thr-1455 to Asn-1600 form a C-terminal hotdog fold region. The active-site Proton donor; for dehydratase activity is the Asp-1514. The tract at residues Ala-1626–Thr-1652 is disordered. Positions Ala-1643–Thr-1652 are enriched in polar residues. A Carrier 1 domain is found at Ser-1649–Gln-1726. Ser-1686 carries the post-translational modification O-(pantetheine 4'-phosphoryl)serine. Residues Ala-1733–Thr-1762 are disordered. Residues Glu-1735–Val-1755 show a composition bias toward polar residues. Residues Asp-1765 to Glu-1839 form the Carrier 2 domain. The residue at position 1799 (Ser-1799) is an O-(pantetheine 4'-phosphoryl)serine. The disordered stretch occupies residues Ala-1840–Glu-1859. Residues Ala-1875–Glu-2151 are thioesterase (TE) domain. Residue Ser-1981 is the For thioesterase activity of the active site.

Functionally, polyketide synthase; part of the Pks2 gene cluster that mediates the formation of infectious structures (appressoria), enabling these fungi to kill insects faster. The product of the Pks2 gene cluster is different from the one of Pks1 and has still not been identified. The protein is Polyketide synthase 2 of Metarhizium robertsii (strain ARSEF 23 / ATCC MYA-3075) (Metarhizium anisopliae (strain ARSEF 23)).